Reading from the N-terminus, the 163-residue chain is Nucleotide-binding protein HD_0358 (163 aa).

It belongs to the YajQ family.

In terms of biological role, nucleotide-binding protein. This chain is Nucleotide-binding protein HD_0358, found in Haemophilus ducreyi (strain 35000HP / ATCC 700724).